Consider the following 60-residue polypeptide: Metallothionein B (60 aa).

The segment at 1–28 (MDPCECTKSGTCNCGGSCTCTNCSCTSC) is beta. A divalent metal cation is bound by residues C4, C6, C12, C14, C18, C20, C23, C25, C28, C32, C33, C35, C36, C40, C43, C47, C49, C54, C58, and C59. Residues 29–60 (KKSCCPCCPSGCTKCASGCVCKGKTCDTSCCQ) are alpha.

This sequence belongs to the metallothionein superfamily. Type 1 family.

Functionally, metallothioneins have a high content of cysteine residues that bind various heavy metals. The polypeptide is Metallothionein B (mtb) (Chaenocephalus aceratus (Blackfin icefish)).